A 1404-amino-acid polypeptide reads, in one-letter code: DNA (cytosine-5)-methyltransferase 3 (1404 aa).

The segment covering 1–10 (MKTKAGKQKK) has biased composition (basic residues). Residues 1-35 (MKTKAGKQKKRSVDSDDDVSRERRPKRATSGTNFK) are disordered. A compositionally biased stretch (basic and acidic residues) spans 11–22 (RSVDSDDDVSRE). A Glycyl lysine isopeptide (Lys-Gly) (interchain with G-Cter in ubiquitin) cross-link involves residue lysine 486. 2 BAH domains span residues 614–748 (RKMD…FSLP) and 788–929 (IKYS…KKLP). The 434-residue stretch at 969–1402 (LATLDIFAGC…RKLKEALHLR (434 aa)) folds into the SAM-dependent MTase C5-type domain. Cysteine 1085 is an active-site residue.

The protein belongs to the class I-like SAM-binding methyltransferase superfamily. C5-methyltransferase family.

It is found in the nucleus. The catalysed reaction is a 2'-deoxycytidine in DNA + S-adenosyl-L-methionine = a 5-methyl-2'-deoxycytidine in DNA + S-adenosyl-L-homocysteine + H(+). Its function is as follows. Maintains chromatin CpG methylation that plays a role in genomic imprinting, regulation of embryogenesis and seed viability. Required for proper patterns of CG DNA methylation in dividing cells. Required during the endosperm development in seeds. In Arabidopsis thaliana (Mouse-ear cress), this protein is DNA (cytosine-5)-methyltransferase 3 (MET3).